The following is a 415-amino-acid chain: Diaminopimelate decarboxylase (415 aa).

Lys-60 is subject to N6-(pyridoxal phosphate)lysine. Pyridoxal 5'-phosphate-binding positions include Gly-239 and 274–277 (EPGR). Arg-277, Arg-313, and Tyr-317 together coordinate substrate. Cys-344 acts as the Proton donor in catalysis. Glu-345 and Tyr-372 together coordinate substrate. Pyridoxal 5'-phosphate is bound at residue Tyr-372.

It belongs to the Orn/Lys/Arg decarboxylase class-II family. LysA subfamily. As to quaternary structure, homodimer. Requires pyridoxal 5'-phosphate as cofactor.

The enzyme catalyses meso-2,6-diaminopimelate + H(+) = L-lysine + CO2. Its pathway is amino-acid biosynthesis; L-lysine biosynthesis via DAP pathway; L-lysine from DL-2,6-diaminopimelate: step 1/1. Its function is as follows. Specifically catalyzes the decarboxylation of meso-diaminopimelate (meso-DAP) to L-lysine. In Haemophilus influenzae (strain ATCC 51907 / DSM 11121 / KW20 / Rd), this protein is Diaminopimelate decarboxylase.